The chain runs to 776 residues: 5-methyltetrahydropteroyltriglutamate--homocysteine methyltransferase (776 aa).

Residues 16–19 and lysine 112 contribute to the 5-methyltetrahydropteroyltri-L-glutamate site; that span reads RELK. Residues 435–437 and glutamate 488 contribute to the L-homocysteine site; that span reads IGS. L-methionine is bound by residues 435-437 and glutamate 488; that span reads IGS. 5-methyltetrahydropteroyltri-L-glutamate is bound by residues 519–520 and tryptophan 565; that span reads RC. Position 603 (aspartate 603) interacts with L-homocysteine. Aspartate 603 provides a ligand contact to L-methionine. Glutamate 609 is a binding site for 5-methyltetrahydropteroyltri-L-glutamate. Zn(2+)-binding residues include histidine 645, cysteine 647, and glutamate 669. Histidine 698 (proton donor) is an active-site residue. A Zn(2+)-binding site is contributed by cysteine 730.

The protein belongs to the vitamin-B12 independent methionine synthase family. The cofactor is Zn(2+).

The enzyme catalyses 5-methyltetrahydropteroyltri-L-glutamate + L-homocysteine = tetrahydropteroyltri-L-glutamate + L-methionine. It functions in the pathway amino-acid biosynthesis; L-methionine biosynthesis via de novo pathway; L-methionine from L-homocysteine (MetE route): step 1/1. Its function is as follows. Catalyzes the transfer of a methyl group from 5-methyltetrahydrofolate to homocysteine resulting in methionine formation. In Ralstonia pickettii (strain 12J), this protein is 5-methyltetrahydropteroyltriglutamate--homocysteine methyltransferase.